A 42-amino-acid polypeptide reads, in one-letter code: Photosystem I reaction center subunit IX (42 aa).

The chain crosses the membrane as a helical span at residues tyrosine 7 to isoleucine 27.

It belongs to the PsaJ family.

The protein resides in the plastid. It localises to the chloroplast thylakoid membrane. Functionally, may help in the organization of the PsaE and PsaF subunits. This Marchantia polymorpha (Common liverwort) protein is Photosystem I reaction center subunit IX.